Consider the following 431-residue polypeptide: Extensin-3 (431 aa).

The signal sequence occupies residues 1–27; sequence MGSPMASLVATLLVLTISLTFVSQSTA. A run of 3 repeats spans residues 33 to 41, 49 to 55, and 56 to 63. The interval 33–384 is 13 X 9 AA repeats of S-P-P-P-P-V-K-H-Y; the sequence is SPPPPVKHYT…KSPPPPVKHY (352 aa). The interval 42 to 408 is disordered; it reads TPPVKHYSPP…KYVYKSPPPP (367 aa). Residues 49–59 show a composition bias toward pro residues; sequence SPPPVYHSPPP. The interval 49–391 is 13 X 7 AA repeats of S-P-P-P-V-Y-H; it reads SPPPVYHSPP…KHYSPPPVYH (343 aa). Residues 56 to 371 are 12 X 8 AA repeats of S-P-P-P-P-K-K-H; sequence SPPPPKKHYE…YHSPPPPKKH (316 aa). Residues 64-67 are isodityrosine cross-linking; it reads YEYK. Repeat copies occupy residues 68-76, 77-83, and 84-91. The span at 68–87 shows a compositional bias: pro residues; sequence SPPPPVKHYSPPPVYHSPPP. The tract at residues 92–95 is isodityrosine cross-linking; sequence YVYK. 3 consecutive repeat copies span residues 96-104, 105-111, and 112-119. Pro residues predominate over residues 96–115; sequence SPPPPVKHYSPPPVYHSPPP. Residues 120–123 are isodityrosine cross-linking; sequence YVYK. 3 repeat units span residues 124-132, 133-139, and 140-147. Pro residues predominate over residues 124–143; the sequence is SPPPPVKHYSPPPVYHSPPP. Positions 148–151 are isodityrosine cross-linking; it reads YVYK. Repeat copies occupy residues 152-160, 161-167, and 168-175. Pro residues predominate over residues 152-171; that stretch reads SPPPPVKHYSPPPVYHSPPP. Residues 176 to 179 are isodityrosine cross-linking; it reads YVYK. 3 tandem repeats follow at residues 180–188, 189–195, and 196–203. Pro residues predominate over residues 180 to 199; the sequence is SPPPPVKHYSPPPVYHSPPP. Residues 204–207 are isodityrosine cross-linking; it reads YVYK. 3 tandem repeats follow at residues 208 to 216, 217 to 223, and 224 to 231. Residues 208 to 227 show a composition bias toward pro residues; the sequence is SPPPPVKHYSPPPVYHSPPP. An isodityrosine cross-linking region spans residues 232-235; it reads YVYK. 3 tandem repeats follow at residues 236 to 244, 245 to 251, and 252 to 259. The span at 236 to 255 shows a compositional bias: pro residues; it reads SPPPPVKHYSPPPVYHSPPP. The interval 260-263 is isodityrosine cross-linking; the sequence is YVYK. A run of 3 repeats spans residues 264–272, 273–279, and 280–287. The span at 264–283 shows a compositional bias: pro residues; it reads SPPPPVKHYSPPPVYHSPPP. The isodityrosine cross-linking stretch occupies residues 288–291; it reads YVYK. Repeat copies occupy residues 292–300, 301–307, and 308–315. Residues 292 to 311 show a composition bias toward pro residues; sequence SPPPPVKHYSPPPVYHSPPP. Residues 316-319 are isodityrosine cross-linking; sequence YVYK. 3 repeat units span residues 320–328, 329–335, and 336–343. The segment covering 320 to 339 has biased composition (pro residues); the sequence is SPPPPVKHYSPPPVYHSPPP. The segment at 344-347 is isodityrosine cross-linking; it reads YVYK. 3 tandem repeats follow at residues 348–356, 357–363, and 364–371. Positions 348–367 are enriched in pro residues; it reads SPPPPVKHYSPPPVYHSPPP. Positions 372–375 are isodityrosine cross-linking; that stretch reads YVYK. Tandem repeats lie at residues 376–384 and 385–391. The segment covering 376 to 395 has biased composition (pro residues); that stretch reads SPPPPVKHYSPPPVYHSPPP. Isodityrosine cross-linking stretches follow at residues 400–403 and 420–423; these read YVYK and YLYK.

The protein belongs to the extensin family. The proline residues of the Ser-Pro(3) repeats are hydroxylated and then O-glycosylated (arabinosylation) by HPAT1, HPAT2 and HPAT3. Around 20% of Hyp units are in the nonglycosylated form. The Ser residues are O-galactosylated. The lack of Ser-O-galactosylation does not affect Hyp-O-arabinosylation, but both types of O-glycosylation are central for the functionality of the protein. Correct Hyp-O-arabinosylation appears to be responsible for generating a bend on the EXT3 backbone around a YVY motif, which may represent a better scenario for Tyr intramolecular cross-links (isodityrosine type). Post-translationally, synthetised as soluble proteins which become insolubilised in the cell wall through the intermolecular cross-linking of Tyr on adjacent monomers. Isodityrosine (IDT) stabilizes and makes rigid the part of the polypeptide where IDT functional sites are present. Predominantly expressed in the roots.

It localises to the secreted. The protein resides in the primary cell wall. Its function is as follows. Structural component which strengthens the primary cell wall. Forms dendritic structures indicating a propensity for self-assembly through tyrosine cross-linking. Forms intermolecular cross-links exclusively by pulcherosine (three Tyr). Scaffold formation requires an unobstructed C-terminus of EXT3. Required for the correct positioning of the cell plate during cytokinesis in cells of the developing embryo. Extensins contain a characteristic repeat of the pentapeptide Ser-Pro(4). For this particular extensin, a typical repeat of Ser-Pro(3) is found. The polypeptide is Extensin-3 (Arabidopsis thaliana (Mouse-ear cress)).